We begin with the raw amino-acid sequence, 472 residues long: 2-amino-4-ketopentanoate thiolase beta subunit (472 aa).

Lys102 carries the post-translational modification N6-(pyridoxal phosphate)lysine. Residues Asn128 and 238-242 (AGGGN) contribute to the pyridoxal 5'-phosphate site.

It belongs to the threonine synthase family. Heterodimer with OrtA. Pyridoxal 5'-phosphate is required as a cofactor.

It carries out the reaction D-alanine + acetyl-CoA = (2R)-2-amino-4-oxopentanoate + CoA. Its function is as follows. Involved in the ornithine fermentation pathway. Catalyzes the thiolytic cleavage of 2-amino-4-ketopentanoate (AKP) with coenzyme A (CoA) to form acetyl-CoA and alanine. It is strictly specific for AKP. The chain is 2-amino-4-ketopentanoate thiolase beta subunit from Unknown prokaryotic organism.